We begin with the raw amino-acid sequence, 352 residues long: tRNA-specific 2-thiouridylase MnmA (352 aa).

ATP contacts are provided by residues 11–18 (AMSGGVDS) and M37. C101 functions as the Nucleophile in the catalytic mechanism. C101 and C197 form a disulfide bridge. G125 contacts ATP. The interaction with tRNA stretch occupies residues 147-149 (KDQ). C197 acts as the Cysteine persulfide intermediate in catalysis. Residues 302 to 303 (RY) are interaction with tRNA.

It belongs to the MnmA/TRMU family.

It is found in the cytoplasm. It catalyses the reaction S-sulfanyl-L-cysteinyl-[protein] + uridine(34) in tRNA + AH2 + ATP = 2-thiouridine(34) in tRNA + L-cysteinyl-[protein] + A + AMP + diphosphate + H(+). Functionally, catalyzes the 2-thiolation of uridine at the wobble position (U34) of tRNA, leading to the formation of s(2)U34. This is tRNA-specific 2-thiouridylase MnmA from Syntrophotalea carbinolica (strain DSM 2380 / NBRC 103641 / GraBd1) (Pelobacter carbinolicus).